Here is a 258-residue protein sequence, read N- to C-terminus: UDP-2,3-diacylglucosamine hydrolase (258 aa).

Residues D15, H17, D48, N88, and H123 each coordinate Mn(2+). 88 to 89 (NR) lines the substrate pocket. Substrate contacts are provided by D131, S169, N173, K176, and H204. H204 and H206 together coordinate Mn(2+).

It belongs to the LpxH family. Mn(2+) is required as a cofactor.

Its subcellular location is the cell inner membrane. It catalyses the reaction UDP-2-N,3-O-bis[(3R)-3-hydroxytetradecanoyl]-alpha-D-glucosamine + H2O = 2-N,3-O-bis[(3R)-3-hydroxytetradecanoyl]-alpha-D-glucosaminyl 1-phosphate + UMP + 2 H(+). It functions in the pathway glycolipid biosynthesis; lipid IV(A) biosynthesis; lipid IV(A) from (3R)-3-hydroxytetradecanoyl-[acyl-carrier-protein] and UDP-N-acetyl-alpha-D-glucosamine: step 4/6. Hydrolyzes the pyrophosphate bond of UDP-2,3-diacylglucosamine to yield 2,3-diacylglucosamine 1-phosphate (lipid X) and UMP by catalyzing the attack of water at the alpha-P atom. Involved in the biosynthesis of lipid A, a phosphorylated glycolipid that anchors the lipopolysaccharide to the outer membrane of the cell. In Bordetella pertussis (strain Tohama I / ATCC BAA-589 / NCTC 13251), this protein is UDP-2,3-diacylglucosamine hydrolase.